The primary structure comprises 335 residues: Biotin synthase (335 aa).

The Radical SAM core domain occupies 39–267; it reads TKIQVCKLIS…ASDVRLSAGR (229 aa). 3 residues coordinate [4Fe-4S] cluster: cysteine 54, cysteine 58, and cysteine 61. [2Fe-2S] cluster is bound by residues cysteine 98, cysteine 130, cysteine 190, and arginine 262.

This sequence belongs to the radical SAM superfamily. Biotin synthase family. As to quaternary structure, homodimer. [4Fe-4S] cluster serves as cofactor. The cofactor is [2Fe-2S] cluster.

The catalysed reaction is (4R,5S)-dethiobiotin + (sulfur carrier)-SH + 2 reduced [2Fe-2S]-[ferredoxin] + 2 S-adenosyl-L-methionine = (sulfur carrier)-H + biotin + 2 5'-deoxyadenosine + 2 L-methionine + 2 oxidized [2Fe-2S]-[ferredoxin]. It participates in cofactor biosynthesis; biotin biosynthesis; biotin from 7,8-diaminononanoate: step 2/2. Catalyzes the conversion of dethiobiotin (DTB) to biotin by the insertion of a sulfur atom into dethiobiotin via a radical-based mechanism. This chain is Biotin synthase, found in Nostoc punctiforme (strain ATCC 29133 / PCC 73102).